The primary structure comprises 239 residues: Ribonuclease PH (239 aa).

Phosphate contacts are provided by residues arginine 86 and 124–126 (GTR).

The protein belongs to the RNase PH family. In terms of assembly, homohexameric ring arranged as a trimer of dimers.

It catalyses the reaction tRNA(n+1) + phosphate = tRNA(n) + a ribonucleoside 5'-diphosphate. Functionally, phosphorolytic 3'-5' exoribonuclease that plays an important role in tRNA 3'-end maturation. Removes nucleotide residues following the 3'-CCA terminus of tRNAs; can also add nucleotides to the ends of RNA molecules by using nucleoside diphosphates as substrates, but this may not be physiologically important. Probably plays a role in initiation of 16S rRNA degradation (leading to ribosome degradation) during starvation. This Rickettsia felis (strain ATCC VR-1525 / URRWXCal2) (Rickettsia azadi) protein is Ribonuclease PH.